The following is a 329-amino-acid chain: Sex comb on midleg-like protein 1 (329 aa).

Residues 136–160 (SYSPTLPVSRRENNSPSNLPRPSFC) are disordered. Phosphoserine is present on residues serine 138 and serine 238. In terms of domain architecture, SAM spans 258–325 (WSVEAVVLFL…YYIDRLKQGK (68 aa)).

It belongs to the SCM family.

It is found in the nucleus. Its function is as follows. Putative Polycomb group (PcG) protein. PcG proteins act by forming multiprotein complexes, which are required to maintain the transcriptionally repressive state of homeotic genes throughout development. May be involved in spermatogenesis during sexual maturation. The protein is Sex comb on midleg-like protein 1 (SCML1) of Pongo pygmaeus (Bornean orangutan).